The sequence spans 193 residues: Orotate phosphoribosyltransferase (193 aa).

Residue 117–125 (EDVVTTGLS) participates in 5-phospho-alpha-D-ribose 1-diphosphate binding. Positions 121 and 149 each coordinate orotate.

It belongs to the purine/pyrimidine phosphoribosyltransferase family. PyrE subfamily. In terms of assembly, homodimer. It depends on Mg(2+) as a cofactor.

It carries out the reaction orotidine 5'-phosphate + diphosphate = orotate + 5-phospho-alpha-D-ribose 1-diphosphate. Its pathway is pyrimidine metabolism; UMP biosynthesis via de novo pathway; UMP from orotate: step 1/2. Its function is as follows. Catalyzes the transfer of a ribosyl phosphate group from 5-phosphoribose 1-diphosphate to orotate, leading to the formation of orotidine monophosphate (OMP). This Erythrobacter litoralis (strain HTCC2594) protein is Orotate phosphoribosyltransferase.